The primary structure comprises 442 residues: C4-dicarboxylate transport protein 4 (442 aa).

Helical transmembrane passes span 20-40 (ILYVQVLIAIVLGVLIGYFYP), 53-73 (FIALIKMMIAPVIFCTVVHGI), 90-110 (LIYFESVSTVALAVGLLVGEV), 160-180 (GDLLQVLLISILSGFAIAFLG), 209-229 (PVGAFGAMAFTVGAYGLGSLL), and 233-253 (ALIGTFYLTSILFVLIVLGAI).

It belongs to the dicarboxylate/amino acid:cation symporter (DAACS) (TC 2.A.23) family.

The protein localises to the cell inner membrane. Functionally, responsible for the transport of dicarboxylates such as succinate, fumarate, and malate from the periplasm across the membrane. In Bradyrhizobium diazoefficiens (strain JCM 10833 / BCRC 13528 / IAM 13628 / NBRC 14792 / USDA 110), this protein is C4-dicarboxylate transport protein 4.